Consider the following 254-residue polypeptide: Pectate lyase E (254 aa).

A signal peptide spans 1–17 (MYQPLLLLPLLLTSAFA). The interval 227 to 254 (TNNNSKEPKKKSSGPSSYCKYSEPLSKC) is disordered. N-linked (GlcNAc...) asparagine glycosylation is present at Asn229. Residues 239–254 (SGPSSYCKYSEPLSKC) are compositionally biased toward low complexity.

This sequence belongs to the polysaccharide lyase 3 family. The cofactor is Ca(2+).

It is found in the secreted. The catalysed reaction is Eliminative cleavage of (1-&gt;4)-alpha-D-galacturonan to give oligosaccharides with 4-deoxy-alpha-D-galact-4-enuronosyl groups at their non-reducing ends.. Its function is as follows. Pectinolytic enzyme consist of four classes of enzymes: pectin lyase, polygalacturonase, pectin methylesterase and rhamnogalacturonase. Among pectinolytic enzymes, pectin lyase is the most important in depolymerization of pectin, since it cleaves internal glycosidic bonds of highly methylated pectins. Favors pectate, the anion, over pectin, the methyl ester. The chain is Pectate lyase E (plyE) from Emericella nidulans (strain FGSC A4 / ATCC 38163 / CBS 112.46 / NRRL 194 / M139) (Aspergillus nidulans).